The sequence spans 203 residues: Endo-type membrane-bound lytic murein transglycosylase A (203 aa).

The N-terminal stretch at 1 to 15 is a signal peptide; the sequence is MKLRWFAFLIVLLAG. Cys-16 carries N-palmitoyl cysteine lipidation. The S-diacylglycerol cysteine moiety is linked to residue Cys-16.

It belongs to the transglycosylase Slt family.

It localises to the cell outer membrane. The catalysed reaction is Endolytic cleavage of the (1-&gt;4)-beta-glycosidic linkage between N-acetylmuramic acid (MurNAc) and N-acetylglucosamine (GlcNAc) residues in peptidoglycan with concomitant formation of a 1,6-anhydrobond in the MurNAc residue.. Murein-degrading enzyme. May play a role in recycling of muropeptides during cell elongation and/or cell division. Preferentially cleaves at a distance of more than two disaccharide units from the ends of the glycan chain. This chain is Endo-type membrane-bound lytic murein transglycosylase A, found in Shigella boydii serotype 4 (strain Sb227).